The sequence spans 110 residues: NADH-quinone oxidoreductase subunit K (110 aa).

3 consecutive transmembrane segments (helical) span residues 13 to 33, 38 to 58, and 70 to 90; these read VTHG…GIII, ILIL…NFLI, and VFVF…LAIV.

The protein belongs to the complex I subunit 4L family. In terms of assembly, NDH-1 is composed of 14 different subunits. Subunits NuoA, H, J, K, L, M, N constitute the membrane sector of the complex.

The protein resides in the cell inner membrane. It carries out the reaction a quinone + NADH + 5 H(+)(in) = a quinol + NAD(+) + 4 H(+)(out). In terms of biological role, NDH-1 shuttles electrons from NADH, via FMN and iron-sulfur (Fe-S) centers, to quinones in the respiratory chain. The immediate electron acceptor for the enzyme in this species is believed to be ubiquinone. Couples the redox reaction to proton translocation (for every two electrons transferred, four hydrogen ions are translocated across the cytoplasmic membrane), and thus conserves the redox energy in a proton gradient. The sequence is that of NADH-quinone oxidoreductase subunit K from Francisella tularensis subsp. tularensis (strain FSC 198).